The sequence spans 197 residues: Holliday junction branch migration complex subunit RuvA (197 aa).

The domain I stretch occupies residues Met1–His63. The interval Thr64–Ser142 is domain II. The interval Lys143–Ile147 is flexible linker. Positions Asn148 to Lys197 are domain III.

It belongs to the RuvA family. Homotetramer. Forms an RuvA(8)-RuvB(12)-Holliday junction (HJ) complex. HJ DNA is sandwiched between 2 RuvA tetramers; dsDNA enters through RuvA and exits via RuvB. An RuvB hexamer assembles on each DNA strand where it exits the tetramer. Each RuvB hexamer is contacted by two RuvA subunits (via domain III) on 2 adjacent RuvB subunits; this complex drives branch migration. In the full resolvosome a probable DNA-RuvA(4)-RuvB(12)-RuvC(2) complex forms which resolves the HJ.

It is found in the cytoplasm. In terms of biological role, the RuvA-RuvB-RuvC complex processes Holliday junction (HJ) DNA during genetic recombination and DNA repair, while the RuvA-RuvB complex plays an important role in the rescue of blocked DNA replication forks via replication fork reversal (RFR). RuvA specifically binds to HJ cruciform DNA, conferring on it an open structure. The RuvB hexamer acts as an ATP-dependent pump, pulling dsDNA into and through the RuvAB complex. HJ branch migration allows RuvC to scan DNA until it finds its consensus sequence, where it cleaves and resolves the cruciform DNA. In Streptococcus mutans serotype c (strain ATCC 700610 / UA159), this protein is Holliday junction branch migration complex subunit RuvA.